We begin with the raw amino-acid sequence, 165 residues long: 2-C-methyl-D-erythritol 2,4-cyclodiphosphate synthase (165 aa).

2 residues coordinate a divalent metal cation: Asp13 and His15. 4-CDP-2-C-methyl-D-erythritol 2-phosphate-binding positions include 13–15 (DRH) and 39–40 (HS). His47 provides a ligand contact to a divalent metal cation. Residues 61–63 (DIG) and Phe141 contribute to the 4-CDP-2-C-methyl-D-erythritol 2-phosphate site.

It belongs to the IspF family. In terms of assembly, homotrimer. A divalent metal cation is required as a cofactor.

It carries out the reaction 4-CDP-2-C-methyl-D-erythritol 2-phosphate = 2-C-methyl-D-erythritol 2,4-cyclic diphosphate + CMP. It participates in isoprenoid biosynthesis; isopentenyl diphosphate biosynthesis via DXP pathway; isopentenyl diphosphate from 1-deoxy-D-xylulose 5-phosphate: step 4/6. Involved in the biosynthesis of isopentenyl diphosphate (IPP) and dimethylallyl diphosphate (DMAPP), two major building blocks of isoprenoid compounds. Catalyzes the conversion of 4-diphosphocytidyl-2-C-methyl-D-erythritol 2-phosphate (CDP-ME2P) to 2-C-methyl-D-erythritol 2,4-cyclodiphosphate (ME-CPP) with a corresponding release of cytidine 5-monophosphate (CMP). This chain is 2-C-methyl-D-erythritol 2,4-cyclodiphosphate synthase, found in Thermotoga neapolitana (strain ATCC 49049 / DSM 4359 / NBRC 107923 / NS-E).